We begin with the raw amino-acid sequence, 579 residues long: Probable cholinesterase (579 aa).

Positions 1–19 (MTDHKIIMLLLLGIYCIQA) are cleaved as a signal peptide. N-linked (GlcNAc...) asparagine; by host glycosylation is found at Asn-77 and Asn-144. The active-site Acyl-ester intermediate is the Ser-217. N-linked (GlcNAc...) asparagine; by host glycans are attached at residues Asn-257, Asn-269, and Asn-283. Glu-337 acts as the Charge relay system in catalysis. N-linked (GlcNAc...) asparagine; by host glycans are attached at residues Asn-373 and Asn-394. His-451 (charge relay system) is an active-site residue. A glycan (N-linked (GlcNAc...) asparagine; by host) is linked at Asn-469.

This sequence belongs to the type-B carboxylesterase/lipase family.

The catalysed reaction is an acylcholine + H2O = a carboxylate + choline + H(+). Its function is as follows. May be involved in the disruption of the host membrane. The polypeptide is Probable cholinesterase (Acanthamoeba polyphaga mimivirus (APMV)).